Here is a 238-residue protein sequence, read N- to C-terminus: Glycerol-3-phosphate acyltransferase (238 aa).

A run of 6 helical transmembrane segments spans residues 5-25 (VIFGSNILLILVAYFIGSINF), 61-81 (FLVFFLDVSKSFWFAIISAIL), 88-108 (FGAVITQLVVLFVIIGHVFPI), 125-145 (IASLNIILAIIGGIIFFAMIF), 149-169 (IVSLGSFITPFILVIFMIIPW), and 194-214 (AWYLSSLFLFLAALIILFTHI).

This sequence belongs to the PlsY family. As to quaternary structure, probably interacts with PlsX.

The protein localises to the cell membrane. It catalyses the reaction an acyl phosphate + sn-glycerol 3-phosphate = a 1-acyl-sn-glycero-3-phosphate + phosphate. It functions in the pathway lipid metabolism; phospholipid metabolism. Functionally, catalyzes the transfer of an acyl group from acyl-phosphate (acyl-PO(4)) to glycerol-3-phosphate (G3P) to form lysophosphatidic acid (LPA). This enzyme utilizes acyl-phosphate as fatty acyl donor, but not acyl-CoA or acyl-ACP. This is Glycerol-3-phosphate acyltransferase from Mycoplasma mobile (strain ATCC 43663 / 163K / NCTC 11711) (Mesomycoplasma mobile).